The chain runs to 159 residues: Dynein 18 kDa light chain, flagellar outer arm (159 aa).

3 consecutive EF-hand domains span residues 18–53 (EEMD…LGQN), 54–89 (PTEE…NKQM), and 129–159 (ELTV…ALLS). 10 residues coordinate Ca(2+): aspartate 31, aspartate 33, serine 35, threonine 37, glutamate 42, aspartate 67, aspartate 69, serine 71, cysteine 73, and glutamate 78.

Consists of at least 3 heavy chains (alpha, beta and gamma), 2 intermediate chains and 8 light chains.

The protein resides in the cell projection. It is found in the cilium. Its subcellular location is the flagellum. In terms of biological role, may be involved in the calcium-mediated regulation of dynein motor function. Binds 1 mole of calcium. The protein is Dynein 18 kDa light chain, flagellar outer arm of Chlamydomonas reinhardtii (Chlamydomonas smithii).